Here is a 77-residue protein sequence, read N- to C-terminus: Small ribosomal subunit protein bS16c (77 aa).

Belongs to the bacterial ribosomal protein bS16 family.

It is found in the plastid. The protein resides in the chloroplast. The protein is Small ribosomal subunit protein bS16c of Eucalyptus globulus subsp. globulus (Tasmanian blue gum).